The following is a 485-amino-acid chain: NADH-quinone oxidoreductase subunit N (485 aa).

14 helical membrane passes run 8-28 (LIAL…MLSI), 35-55 (FLNA…LWFV), 75-95 (LYTG…YPWL), 105-125 (FYLL…ANHL), 127-147 (ALFL…GYAF), 159-179 (YTIL…LVYA), 203-223 (LLAG…LVPF), 235-255 (PAPV…GVVM), 271-291 (VVLG…ALSQ), 297-317 (LLGY…IALQ), 326-346 (VGVY…VVSL), 374-394 (AVMT…GFIG), 408-430 (WWLV…RVAV), and 455-475 (IVVL…QPLI).

The protein belongs to the complex I subunit 2 family. NDH-1 is composed of 13 different subunits. Subunits NuoA, H, J, K, L, M, N constitute the membrane sector of the complex.

It localises to the cell inner membrane. It carries out the reaction a quinone + NADH + 5 H(+)(in) = a quinol + NAD(+) + 4 H(+)(out). In terms of biological role, NDH-1 shuttles electrons from NADH, via FMN and iron-sulfur (Fe-S) centers, to quinones in the respiratory chain. The immediate electron acceptor for the enzyme in this species is believed to be ubiquinone. Couples the redox reaction to proton translocation (for every two electrons transferred, four hydrogen ions are translocated across the cytoplasmic membrane), and thus conserves the redox energy in a proton gradient. This Klebsiella pneumoniae (strain 342) protein is NADH-quinone oxidoreductase subunit N.